The sequence spans 576 residues: NADH-quinone oxidoreductase subunit C/D (576 aa).

An NADH dehydrogenase I subunit C region spans residues 1–176 (MAWISLEKAK…NLEGLFNYDR (176 aa)). The NADH dehydrogenase I subunit D stretch occupies residues 200-576 (SQIVLNWGPL…IDPVVGETDR (377 aa)).

In the N-terminal section; belongs to the complex I 30 kDa subunit family. This sequence in the C-terminal section; belongs to the complex I 49 kDa subunit family. NDH-1 is composed of 13 different subunits. Subunits NuoB, CD, E, F, and G constitute the peripheral sector of the complex.

Its subcellular location is the cell inner membrane. The enzyme catalyses a quinone + NADH + 5 H(+)(in) = a quinol + NAD(+) + 4 H(+)(out). NDH-1 shuttles electrons from NADH, via FMN and iron-sulfur (Fe-S) centers, to quinones in the respiratory chain. The immediate electron acceptor for the enzyme in this species is believed to be ubiquinone. Couples the redox reaction to proton translocation (for every two electrons transferred, four hydrogen ions are translocated across the cytoplasmic membrane), and thus conserves the redox energy in a proton gradient. In Sulfurihydrogenibium sp. (strain YO3AOP1), this protein is NADH-quinone oxidoreductase subunit C/D.